The chain runs to 157 residues: Large ribosomal subunit protein uL22 (157 aa).

It belongs to the universal ribosomal protein uL22 family. As to quaternary structure, part of the 50S ribosomal subunit.

Functionally, this protein binds specifically to 23S rRNA. It makes multiple contacts with different domains of the 23S rRNA in the assembled 50S subunit and ribosome. The globular domain of the protein is located near the polypeptide exit tunnel on the outside of the subunit, while an extended beta-hairpin is found that lines the wall of the exit tunnel in the center of the 70S ribosome. This chain is Large ribosomal subunit protein uL22, found in Staphylothermus marinus (strain ATCC 43588 / DSM 3639 / JCM 9404 / F1).